The chain runs to 254 residues: MIMASSAAASISMITLRNLSRNHQSHQSTFLGFSRSFHNQRISSNSPGLSTRARSTTSSTGGFFRTICSSSSNDYSRPTKIQELNVYEFNEGDRNSPAVLKLGKKPDQLCLGDLVPFTNKLYTGDLTKRIGITAGLCVLIQHVPEKKGDRFEASYSFYFGDYGHISVQGPYLTYEDTFLAITGGSGVFEGAYGQVKLRQLVYPTKLFYTFYLKGVAADLPVELTGKHVEPSKEVKPAAEAQATQPGATIANFTN.

Residues 1–52 constitute a chloroplast transit peptide; that stretch reads MIMASSAAASISMITLRNLSRNHQSHQSTFLGFSRSFHNQRISSNSPGLSTR.

This sequence belongs to the allene oxide cyclase family. In terms of tissue distribution, highly expressed in fully developed leaves.

It localises to the plastid. It is found in the chloroplast. The catalysed reaction is (9Z,13S,15Z)-12,13-epoxyoctadeca-9,11,15-trienoate = (9S,13S,15Z)-12-oxophyto-10,15-dienoate. In terms of biological role, involved in the production of 12-oxo-phytodienoic acid (OPDA), a precursor of jasmonic acid. This chain is Allene oxide cyclase 4, chloroplastic (AOC4), found in Arabidopsis thaliana (Mouse-ear cress).